The chain runs to 335 residues: MKTYYEQDANVGLLQGKTVAVIGYGSQGHAQAQNLRDSGVEVVVGVRPGKSFEVAKADGFEVMSVSEAVRTAQVVQMLLPDEQQAHVYKAEVEENLREGQMLLFSHGFNIHFGQINPPSYVDVAMVAPKSPGHLVRRVFQEGNGVPALVAVHQDATGTALHVALAYAKGVGCTRAGVIETTFQEETETDLFGEQAVLCGGVTALVKAGFETLTEGGYRPEIAYFECLHELKLIVDLMYEGGLTNMRHSISDTAEFGDYVTGSRIVTDETKKEMKRVLTEIQQGEFAKKWILENQAGRPTYNAMKKAEQNHQLEKVGEELREMMSWIHAPKELVKK.

One can recognise a KARI N-terminal Rossmann domain in the interval methionine 1 to threonine 180. Residues tyrosine 24–glutamine 27, arginine 47, serine 51, and aspartate 81–glutamine 84 each bind NADP(+). Histidine 106 is a catalytic residue. Position 132 (glycine 132) interacts with NADP(+). One can recognise a KARI C-terminal knotted domain in the interval threonine 181–isoleucine 326. Residues aspartate 189, glutamate 193, glutamate 225, and glutamate 229 each coordinate Mg(2+). A substrate-binding site is contributed by serine 250.

The protein belongs to the ketol-acid reductoisomerase family. It depends on Mg(2+) as a cofactor.

It catalyses the reaction (2R)-2,3-dihydroxy-3-methylbutanoate + NADP(+) = (2S)-2-acetolactate + NADPH + H(+). The enzyme catalyses (2R,3R)-2,3-dihydroxy-3-methylpentanoate + NADP(+) = (S)-2-ethyl-2-hydroxy-3-oxobutanoate + NADPH + H(+). The protein operates within amino-acid biosynthesis; L-isoleucine biosynthesis; L-isoleucine from 2-oxobutanoate: step 2/4. It functions in the pathway amino-acid biosynthesis; L-valine biosynthesis; L-valine from pyruvate: step 2/4. In terms of biological role, involved in the biosynthesis of branched-chain amino acids (BCAA). Catalyzes an alkyl-migration followed by a ketol-acid reduction of (S)-2-acetolactate (S2AL) to yield (R)-2,3-dihydroxy-isovalerate. In the isomerase reaction, S2AL is rearranged via a Mg-dependent methyl migration to produce 3-hydroxy-3-methyl-2-ketobutyrate (HMKB). In the reductase reaction, this 2-ketoacid undergoes a metal-dependent reduction by NADPH to yield (R)-2,3-dihydroxy-isovalerate. The chain is Ketol-acid reductoisomerase (NADP(+)) 2 from Bacillus anthracis.